A 285-amino-acid chain; its full sequence is Diaminopimelate epimerase (285 aa).

2 residues coordinate substrate: Asn-15 and Asn-68. Catalysis depends on Cys-77, which acts as the Proton donor. Residues 78–79, Asn-165, Asn-201, and 219–220 contribute to the substrate site; these read GN and ER. Catalysis depends on Cys-228, which acts as the Proton acceptor. Residue 229 to 230 participates in substrate binding; that stretch reads GT.

This sequence belongs to the diaminopimelate epimerase family. In terms of assembly, homodimer.

The protein resides in the cytoplasm. It carries out the reaction (2S,6S)-2,6-diaminopimelate = meso-2,6-diaminopimelate. The protein operates within amino-acid biosynthesis; L-lysine biosynthesis via DAP pathway; DL-2,6-diaminopimelate from LL-2,6-diaminopimelate: step 1/1. In terms of biological role, catalyzes the stereoinversion of LL-2,6-diaminopimelate (L,L-DAP) to meso-diaminopimelate (meso-DAP), a precursor of L-lysine and an essential component of the bacterial peptidoglycan. In Synechococcus sp. (strain JA-3-3Ab) (Cyanobacteria bacterium Yellowstone A-Prime), this protein is Diaminopimelate epimerase.